The following is a 122-amino-acid chain: uncharacterized protein (122 aa).

This is an uncharacterized protein from Carica papaya (Papaya).